The sequence spans 219 residues: Thiamine-phosphate synthase (219 aa).

4-amino-2-methyl-5-(diphosphooxymethyl)pyrimidine contacts are provided by residues 44 to 48 and Asn-79; that span reads QFREK. Mg(2+) contacts are provided by Asp-80 and Asp-99. Ser-117 lines the 4-amino-2-methyl-5-(diphosphooxymethyl)pyrimidine pocket. Residue 143-145 participates in 2-[(2R,5Z)-2-carboxy-4-methylthiazol-5(2H)-ylidene]ethyl phosphate binding; the sequence is TST. 4-amino-2-methyl-5-(diphosphooxymethyl)pyrimidine is bound at residue Lys-146. 2-[(2R,5Z)-2-carboxy-4-methylthiazol-5(2H)-ylidene]ethyl phosphate is bound by residues Gly-175 and 195-196; that span reads IS.

Belongs to the thiamine-phosphate synthase family. Requires Mg(2+) as cofactor.

The catalysed reaction is 2-[(2R,5Z)-2-carboxy-4-methylthiazol-5(2H)-ylidene]ethyl phosphate + 4-amino-2-methyl-5-(diphosphooxymethyl)pyrimidine + 2 H(+) = thiamine phosphate + CO2 + diphosphate. The enzyme catalyses 2-(2-carboxy-4-methylthiazol-5-yl)ethyl phosphate + 4-amino-2-methyl-5-(diphosphooxymethyl)pyrimidine + 2 H(+) = thiamine phosphate + CO2 + diphosphate. It catalyses the reaction 4-methyl-5-(2-phosphooxyethyl)-thiazole + 4-amino-2-methyl-5-(diphosphooxymethyl)pyrimidine + H(+) = thiamine phosphate + diphosphate. Its pathway is cofactor biosynthesis; thiamine diphosphate biosynthesis; thiamine phosphate from 4-amino-2-methyl-5-diphosphomethylpyrimidine and 4-methyl-5-(2-phosphoethyl)-thiazole: step 1/1. Condenses 4-methyl-5-(beta-hydroxyethyl)thiazole monophosphate (THZ-P) and 2-methyl-4-amino-5-hydroxymethyl pyrimidine pyrophosphate (HMP-PP) to form thiamine monophosphate (TMP). In Bacillus cereus (strain ATCC 14579 / DSM 31 / CCUG 7414 / JCM 2152 / NBRC 15305 / NCIMB 9373 / NCTC 2599 / NRRL B-3711), this protein is Thiamine-phosphate synthase.